Reading from the N-terminus, the 444-residue chain is Chromosomal replication initiator protein DnaA (444 aa).

The domain I, interacts with DnaA modulators stretch occupies residues 1–73 (MDSSAQQLWH…AEVVQDIVGY (73 aa)). The tract at residues 73–104 (YPVEIQLTAQQGDLIAIFQPHTSLESELSPTN) is domain II. The tract at residues 105 to 321 (QLNPKYNFSR…GALIRATTYI (217 aa)) is domain III, AAA+ region. Residues G149, G151, K152, and T153 each contribute to the ATP site. The segment at 322–444 (SISGLPMTVE…ERINSLSRNQ (123 aa)) is domain IV, binds dsDNA.

This sequence belongs to the DnaA family. As to quaternary structure, oligomerizes as a right-handed, spiral filament on DNA at oriC.

It is found in the cytoplasm. In terms of biological role, plays an essential role in the initiation and regulation of chromosomal replication. ATP-DnaA binds to the origin of replication (oriC) to initiate formation of the DNA replication initiation complex once per cell cycle. Binds the DnaA box (a 9 base pair repeat at the origin) and separates the double-stranded (ds)DNA. Forms a right-handed helical filament on oriC DNA; dsDNA binds to the exterior of the filament while single-stranded (ss)DNA is stabiized in the filament's interior. The ATP-DnaA-oriC complex binds and stabilizes one strand of the AT-rich DNA unwinding element (DUE), permitting loading of DNA polymerase. After initiation quickly degrades to an ADP-DnaA complex that is not apt for DNA replication. Binds acidic phospholipids. The chain is Chromosomal replication initiator protein DnaA from Microcystis aeruginosa (strain NIES-843 / IAM M-2473).